A 195-amino-acid polypeptide reads, in one-letter code: TM2 domain-containing protein C41D11.9 (195 aa).

Residues 1 to 20 form the signal peptide; it reads MLHKILFLICLASFIPTIGS. Over 21 to 136 the chain is Extracellular; the sequence is ISGTKDVKSK…NWSSGYSWTK (116 aa). 3 N-linked (GlcNAc...) asparagine glycosylation sites follow: N55, N93, and N127. A TM2 domain is found at 131–179; sequence GYSWTKTMILSVVLGGFGADRFYLGLWKSAIGKLFSFGGLGVWTLVDVV. A helical membrane pass occupies residues 137–157; it reads TMILSVVLGGFGADRFYLGLW. At 158–163 the chain is on the cytoplasmic side; that stretch reads KSAIGK. The chain crosses the membrane as a helical span at residues 164–184; the sequence is LFSFGGLGVWTLVDVVLIAVG. The Extracellular portion of the chain corresponds to 185 to 195; it reads YIKPYDGSMYI.

The protein belongs to the TM2 family.

The protein localises to the membrane. This Caenorhabditis elegans protein is TM2 domain-containing protein C41D11.9.